An 806-amino-acid polypeptide reads, in one-letter code: MERLKLGKIPEHWCIRLVAMLLLAIIFLPSTFCDIGSVYNSSYETVIPERLPGKGGKDPGGKVSYMLLMQGQKQLLHLEVKGHYPENNFPVYSYHNGILRQEMPLLSQDCHYEGYMEGVPGSFVSVNICSGLRGVLIKEETSYGIEPMLSSKNFEHVLYTMEHQPVVSCSVTPKDSPGDTSHPPRSRKPDDLLVLTDWWSHTKYVEMFVVVNHQRFQMWGSNINETVQAVMDIIALANSFTRGINTEVVLVGLEIWTEGDPIEVPVDLQTTLRNFNFWRQEKLVGRVRHDVAHLIVGHRPGENEGQAFLRGACSGEFAAAVEAFHHEDVLLFAALMAHELGHNLGIQHDHPTCTCGPKHFCLMGEKIGKDSGFSNCSSDHFLRFLHDHRGVCLLDEPGRQSRMRRAANCGNGVVEDLEQCDCGSDCDKSQCCDENCKLKGNSVCSTELCCFKCNFKKEGDVCRPADGPCDLEEYCNGTSAACPSDRKAQDGSKCHESFLCFNGQCMDPTFQCSRIFGHGSRSASDYCYTSLNSRGDQFGNCGSSSQFPKKYTKCSDKNVMCGKLICTEVAFLPQIQPNNLLLQVPETEDWCWSVAVFDMRDSLHEEYVKDNTYCGKDKVCKNSICEDFTPFSFPCSPSKQCNKHGVCNDLGNCHCSFGFAPPDCKEEGTGGSVDSGPAVNLSNDSSPGPNSTQSSTEELILNLKLIVLAVILVLMILLIIICIISAYTKSETASEAGPSELEELPEGEKEEQEEVLPEEAKGEEEELEYGKEEAEEQGAVEEEGAEEANEEAAAEKKDEDEEEGEE.

An N-terminal signal peptide occupies residues 1-33 (MERLKLGKIPEHWCIRLVAMLLLAIIFLPSTFC). Residues 169-188 (CSVTPKDSPGDTSHPPRSRK) form a disordered region. The region spanning 203–397 (KYVEMFVVVN…HRGVCLLDEP (195 aa)) is the Peptidase M12B domain. A glycan (N-linked (GlcNAc...) asparagine) is linked at N224. 7 disulfides stabilise this stretch: C313/C392, C353/C376, C355/C361, C462/C482, C635/C647, C641/C653, and C655/C664. Residue H338 participates in Zn(2+) binding. The active site involves E339. Residues H342 and H348 each coordinate Zn(2+). N-linked (GlcNAc...) asparagine glycosylation is found at N375 and N476. Positions 406-490 (AANCGNGVVE…ACPSDRKAQD (85 aa)) constitute a Disintegrin domain. The region spanning 631-665 (FSFPCSPSKQCNKHGVCNDLGNCHCSFGFAPPDCK) is the EGF-like domain. Residues 668-694 (GTGGSVDSGPAVNLSNDSSPGPNSTQS) are disordered. Residues N680, N683, and N690 are each glycosylated (N-linked (GlcNAc...) asparagine). Positions 680-694 (NLSNDSSPGPNSTQS) are enriched in polar residues. The chain crosses the membrane as a helical span at residues 705–725 (LIVLAVILVLMILLIIICIIS). Residues 726 to 806 (AYTKSETASE…KDEDEEEGEE (81 aa)) lie on the Cytoplasmic side of the membrane. Residues 735–806 (EAGPSELEEL…KDEDEEEGEE (72 aa)) form a disordered region. A compositionally biased stretch (acidic residues) spans 740-806 (ELEELPEGEK…KDEDEEEGEE (67 aa)).

Heterodimer with ADAM2/fertilin subunit beta. In terms of tissue distribution, testis.

The protein resides in the membrane. Functionally, may play a role in spermatogenesis and sperm maturation. The sequence is that of Disintegrin and metalloproteinase domain-containing protein 1b (Adam1b) from Mus musculus (Mouse).